The chain runs to 203 residues: Protein GrpE 2 (203 aa).

The span at 1 to 12 shows a compositional bias: basic and acidic residues; it reads MPTRPQEPDRAA. Residues 1 to 64 form a disordered region; the sequence is MPTRPQEPDR…APAEDEYTTA (64 aa). Positions 45–56 are enriched in low complexity; that stretch reads GEPGPDAAGPAP.

The protein belongs to the GrpE family. In terms of assembly, homodimer.

The protein resides in the cytoplasm. In terms of biological role, participates actively in the response to hyperosmotic and heat shock by preventing the aggregation of stress-denatured proteins, in association with DnaK and GrpE. It is the nucleotide exchange factor for DnaK and may function as a thermosensor. Unfolded proteins bind initially to DnaJ; upon interaction with the DnaJ-bound protein, DnaK hydrolyzes its bound ATP, resulting in the formation of a stable complex. GrpE releases ADP from DnaK; ATP binding to DnaK triggers the release of the substrate protein, thus completing the reaction cycle. Several rounds of ATP-dependent interactions between DnaJ, DnaK and GrpE are required for fully efficient folding. In Streptomyces avermitilis (strain ATCC 31267 / DSM 46492 / JCM 5070 / NBRC 14893 / NCIMB 12804 / NRRL 8165 / MA-4680), this protein is Protein GrpE 2.